Here is a 1237-residue protein sequence, read N- to C-terminus: Structural protein VP1 (1237 aa).

The region spanning 1006–1222 (EPLRTLLFKL…ENDVRIAMIH (217 aa)) is the PPPDE domain. Active-site residues include His-1040 and Cys-1192.

Its subcellular location is the virion. The chain is Structural protein VP1 from Rice ragged stunt virus (isolate Thailand) (RRSV).